Here is a 757-residue protein sequence, read N- to C-terminus: Protein transport protein SEC23-2 (757 aa).

4 residues coordinate Zn(2+): C56, C61, C80, and C83.

The protein belongs to the SEC23/SEC24 family. SEC23 subfamily. The COPII coat is composed of at least 5 proteins: the SEC23/24 complex, the SEC13/31 complex, and the protein SAR1.

Its subcellular location is the cytoplasm. It localises to the cytoplasmic vesicle. It is found in the COPII-coated vesicle membrane. The protein localises to the endoplasmic reticulum membrane. The protein resides in the golgi apparatus membrane. In terms of biological role, component of the coat protein complex II (COPII) which promotes the formation of transport vesicles from the endoplasmic reticulum (ER). The coat has two main functions, the physical deformation of the endoplasmic reticulum membrane into vesicles and the selection of cargo molecules. The polypeptide is Protein transport protein SEC23-2 (SEC232) (Candida glabrata (strain ATCC 2001 / BCRC 20586 / JCM 3761 / NBRC 0622 / NRRL Y-65 / CBS 138) (Yeast)).